Reading from the N-terminus, the 88-residue chain is UPF0213 protein EF_2693 (88 aa).

Residues 5–82 (KSHYFYVLLC…KKLTRKQKEQ (78 aa)) form the GIY-YIG domain.

It belongs to the UPF0213 family.

The sequence is that of UPF0213 protein EF_2693 from Enterococcus faecalis (strain ATCC 700802 / V583).